We begin with the raw amino-acid sequence, 197 residues long: MEHYLSLFIKSVFIENMALSFFLGMCTFLAVSKKVSTAFGLGVAVIFVLGLSVPVNQLVYSLLKDGAIVEGVDLTFLKFITFIGVIAALVQILEMFLDKFVPALYNALGIYLPLITVNCAIFGAVSFMAQREYNFGESVVYGFGAGLGWMLAIVALAGITEKMKYSDAPKGLKGLGITFIAAGLMAMAFMSFSGIQL.

6 helical membrane-spanning segments follow: residues 11–31, 35–55, 76–96, 108–128, 139–159, and 175–195; these read SVFI…FLAV, VSTA…SVPV, FLKF…LEMF, LGIY…VSFM, VVYG…LAGI, and LGIT…FSGI.

Belongs to the NqrDE/RnfAE family. As to quaternary structure, composed of six subunits; NqrA, NqrB, NqrC, NqrD, NqrE and NqrF.

Its subcellular location is the cell inner membrane. It carries out the reaction a ubiquinone + n Na(+)(in) + NADH + H(+) = a ubiquinol + n Na(+)(out) + NAD(+). In terms of biological role, NQR complex catalyzes the reduction of ubiquinone-1 to ubiquinol by two successive reactions, coupled with the transport of Na(+) ions from the cytoplasm to the periplasm. NqrA to NqrE are probably involved in the second step, the conversion of ubisemiquinone to ubiquinol. This Neisseria meningitidis serogroup C (strain 053442) protein is Na(+)-translocating NADH-quinone reductase subunit E.